The chain runs to 273 residues: Ribosomal RNA small subunit methyltransferase A (273 aa).

S-adenosyl-L-methionine is bound by residues Asn-18, Leu-20, Gly-45, Glu-66, Asp-91, and Asn-113.

This sequence belongs to the class I-like SAM-binding methyltransferase superfamily. rRNA adenine N(6)-methyltransferase family. RsmA subfamily.

The protein resides in the cytoplasm. It catalyses the reaction adenosine(1518)/adenosine(1519) in 16S rRNA + 4 S-adenosyl-L-methionine = N(6)-dimethyladenosine(1518)/N(6)-dimethyladenosine(1519) in 16S rRNA + 4 S-adenosyl-L-homocysteine + 4 H(+). Specifically dimethylates two adjacent adenosines (A1518 and A1519) in the loop of a conserved hairpin near the 3'-end of 16S rRNA in the 30S particle. May play a critical role in biogenesis of 30S subunits. The polypeptide is Ribosomal RNA small subunit methyltransferase A (Salmonella newport (strain SL254)).